We begin with the raw amino-acid sequence, 192 residues long: Cytidylate kinase (192 aa).

7–15 (GPAGSGKST) serves as a coordination point for ATP.

It belongs to the cytidylate kinase family. Type 2 subfamily.

Its subcellular location is the cytoplasm. The catalysed reaction is CMP + ATP = CDP + ADP. It carries out the reaction dCMP + ATP = dCDP + ADP. The protein is Cytidylate kinase of Natronomonas pharaonis (strain ATCC 35678 / DSM 2160 / CIP 103997 / JCM 8858 / NBRC 14720 / NCIMB 2260 / Gabara) (Halobacterium pharaonis).